A 578-amino-acid chain; its full sequence is MSSKKMVNSVEGCAGDALAGFVACNPDLQLLQGYRVALRSDLDSLKGRVALLSGGGSGHEPAHAGFIGKGMLTGVIAGAVFASPAVGSILAAIRAVAQAGTAGTLLIVKNYTGDRLNFGLAMEQAKAEGISVEMVVIEDDSAFTVLKKAGRRGLCGTILIHKVAGALAEEGMGLEEITKKVSVIAKAIGTLGVSLSPCSVPGTKPTFELAADEMELGLGIHGEAGVRRIKLVPVDQIVTLMLDHMTDTSNISHVPVKSGSSVVLMVNNLGGLSFLELGIIADAAIRLLEGRGVKVARALVGTFMSALEMRGVSLTLMLVDEPLLKLIDAETNAKAWPHMSKVSVTGRNRIRAAPTEPAEAPEATAAGGVASKQMTLVLDRISTTLIGLEEHLNALDRAAGDGDCGSTHSRAAKAIQGWLKEGPTPASPAQVLSKLSVLLLEKMGGSSGALYGLFLTAAAQPLKANTDLPAWSAAMDAGLKAMQKYGKAAPGDRTMLDSLWAAAQELQAWKSPGASLLPVLTKAVKSAEAAAEATKNMEAGAGRASYISSAQLDQPDPGAVAAAAIFRAILEVLQTKAA.

The DhaK domain occupies serine 9–tryptophan 336. Dihydroxyacetone contacts are provided by residues glycine 56–histidine 59, lysine 109, and aspartate 114. Histidine 221 acts as the Tele-hemiaminal-histidine intermediate in catalysis. One can recognise a DhaL domain in the interval lysine 372 to glutamate 571. ATP is bound by residues aspartate 401 to cysteine 404, serine 446 to serine 447, glycine 486, and threonine 494 to methionine 495. Phosphoserine occurs at positions 511 and 545. Aspartate 556–glycine 558 is an ATP binding site.

Belongs to the dihydroxyacetone kinase (DAK) family. Homodimer. Interacts with IFIH1 (via the CARD domains), the interaction is inhibited by viral infection. The cofactor is Mg(2+). Requires Mn(2+) as cofactor. Co(2+) is required as a cofactor.

The enzyme catalyses dihydroxyacetone + ATP = dihydroxyacetone phosphate + ADP + H(+). It catalyses the reaction D-glyceraldehyde + ATP = D-glyceraldehyde 3-phosphate + ADP + H(+). The catalysed reaction is FAD = riboflavin cyclic-4',5'-phosphate + AMP + H(+). With respect to regulation, each activity is inhibited by the substrate(s) of the other. Catalyzes both the phosphorylation of dihydroxyacetone and of glyceraldehyde, and the splitting of ribonucleoside diphosphate-X compounds among which FAD is the best substrate. Represses IFIH1-mediated cellular antiviral response. In Rattus norvegicus (Rat), this protein is Triokinase/FMN cyclase (Tkfc).